The following is a 412-amino-acid chain: BSD domain-containing protein 1 (412 aa).

One can recognise a BSD domain in the interval 145 to 197 (WLSTFSLEERKAEISELLVSSPAIRALYTKMVPAAVAHAEFWQRYFYKVFQLE). Basic and acidic residues predominate over residues 208–217 (QRAEQTDHSE). 3 disordered regions span residues 208-227 (QRAE…EDEE), 253-272 (VTVA…ASLS), and 298-412 (ESVT…ENWE). Polar residues-rich tracts occupy residues 259-272 (PESS…ASLS) and 298-308 (ESVTIRVTQPS). Ser308 carries the phosphoserine modification. The span at 328–349 (PEERPAPREETAREDMAQDLRV) shows a compositional bias: basic and acidic residues. Over residues 353 to 372 (NSDSGKSTPSNNGKKGSSTD) the composition is skewed to polar residues. 2 stretches are compositionally biased toward acidic residues: residues 373–390 (VSED…EEEV) and 400–412 (TEEL…ENWE).

The sequence is that of BSD domain-containing protein 1 (bsdc1) from Danio rerio (Zebrafish).